A 261-amino-acid polypeptide reads, in one-letter code: Acetylglutamate kinase (261 aa).

Residues 45-46 (GG), R67, and N162 contribute to the substrate site.

Belongs to the acetylglutamate kinase family. ArgB subfamily.

The protein resides in the cytoplasm. The catalysed reaction is N-acetyl-L-glutamate + ATP = N-acetyl-L-glutamyl 5-phosphate + ADP. Its pathway is amino-acid biosynthesis; L-arginine biosynthesis; N(2)-acetyl-L-ornithine from L-glutamate: step 2/4. In terms of biological role, catalyzes the ATP-dependent phosphorylation of N-acetyl-L-glutamate. This Bacteroides fragilis (strain ATCC 25285 / DSM 2151 / CCUG 4856 / JCM 11019 / LMG 10263 / NCTC 9343 / Onslow / VPI 2553 / EN-2) protein is Acetylglutamate kinase.